A 214-amino-acid chain; its full sequence is Phosphatidylserine decarboxylase proenzyme (214 aa).

Ser183 functions as the Schiff-base intermediate with substrate; via pyruvic acid in the catalytic mechanism. At Ser183 the chain carries Pyruvic acid (Ser); by autocatalysis.

It belongs to the phosphatidylserine decarboxylase family. PSD-A subfamily. In terms of assembly, heterodimer of a large membrane-associated beta subunit and a small pyruvoyl-containing alpha subunit. Pyruvate serves as cofactor. Is synthesized initially as an inactive proenzyme. Formation of the active enzyme involves a self-maturation process in which the active site pyruvoyl group is generated from an internal serine residue via an autocatalytic post-translational modification. Two non-identical subunits are generated from the proenzyme in this reaction, and the pyruvate is formed at the N-terminus of the alpha chain, which is derived from the carboxyl end of the proenzyme. The post-translation cleavage follows an unusual pathway, termed non-hydrolytic serinolysis, in which the side chain hydroxyl group of the serine supplies its oxygen atom to form the C-terminus of the beta chain, while the remainder of the serine residue undergoes an oxidative deamination to produce ammonia and the pyruvoyl prosthetic group on the alpha chain.

The protein localises to the cell membrane. The enzyme catalyses a 1,2-diacyl-sn-glycero-3-phospho-L-serine + H(+) = a 1,2-diacyl-sn-glycero-3-phosphoethanolamine + CO2. The protein operates within phospholipid metabolism; phosphatidylethanolamine biosynthesis; phosphatidylethanolamine from CDP-diacylglycerol: step 2/2. Catalyzes the formation of phosphatidylethanolamine (PtdEtn) from phosphatidylserine (PtdSer). This is Phosphatidylserine decarboxylase proenzyme from Syntrophotalea carbinolica (strain DSM 2380 / NBRC 103641 / GraBd1) (Pelobacter carbinolicus).